A 359-amino-acid chain; its full sequence is 3-dehydroquinate synthase (359 aa).

NAD(+) is bound by residues 71–76, 105–109, 129–130, Lys142, and Lys151; these read DAEAAK, GAVTD, and TT. 3 residues coordinate Zn(2+): Glu184, His247, and His263.

The protein belongs to the sugar phosphate cyclases superfamily. Dehydroquinate synthase family. NAD(+) serves as cofactor. Co(2+) is required as a cofactor. It depends on Zn(2+) as a cofactor.

It localises to the cytoplasm. The catalysed reaction is 7-phospho-2-dehydro-3-deoxy-D-arabino-heptonate = 3-dehydroquinate + phosphate. It functions in the pathway metabolic intermediate biosynthesis; chorismate biosynthesis; chorismate from D-erythrose 4-phosphate and phosphoenolpyruvate: step 2/7. Its function is as follows. Catalyzes the conversion of 3-deoxy-D-arabino-heptulosonate 7-phosphate (DAHP) to dehydroquinate (DHQ). The sequence is that of 3-dehydroquinate synthase from Leifsonia xyli subsp. xyli (strain CTCB07).